A 1020-amino-acid polypeptide reads, in one-letter code: Tetrathionate reductase subunit A (1020 aa).

The tat-type signal signal peptide spans 1–33; that stretch reads MANLTRRQWLKVGLAVGGMVTFGLSYRDVAKRA. The region spanning 71–154 is the 4Fe-4S Mo/W bis-MGD-type domain; it reads QTIAMTQCFG…TLLESLYSPL (84 aa). The [4Fe-4S] cluster site is built by Cys-78, Cys-81, Cys-85, and Cys-140.

Belongs to the prokaryotic molybdopterin-containing oxidoreductase family. Probably composed of three subunits: TtrA, TtrB and TtrC. [4Fe-4S] cluster serves as cofactor. It depends on Mo-bis(molybdopterin guanine dinucleotide) as a cofactor. In terms of processing, predicted to be exported by the Tat system. The position of the signal peptide cleavage has not been experimentally proven.

The protein resides in the periplasm. The protein localises to the cell inner membrane. Part of a membrane-bound tetrathionate reductase that catalyzes the reduction of tetrathionate to thiosulfate. TtrA is the catalytic subunit. During mice infection, the ability to use tetrathionate as an electron acceptor is a growth advantage for S.typhimurium over the competing microbiota in the lumen of the inflamed gut. This chain is Tetrathionate reductase subunit A (ttrA), found in Salmonella typhimurium (strain LT2 / SGSC1412 / ATCC 700720).